The primary structure comprises 718 residues: Origin of replication complex subunit 3 (718 aa).

Residues 26–43 (GAAASSSSSSAPSLPSSG) show a composition bias toward low complexity. The interval 26 to 75 (GAAASSSSSSAPSLPSSGRARRRIDVSGLASPNPKPGKRSRDDDAAEDDD) is disordered. The short motif at 659–666 (IKRKPHTS) is the Nuclear localization signal element.

It belongs to the ORC3 family. As to quaternary structure, component of the origin recognition complex (ORC) composed of at least ORC1, ORC2, ORC3, ORC4, ORC5 and ORC6. ORC is regulated in a cell-cycle and development dependent manner. It is sequentially assembled at the exit from anaphase of mitosis and disassembled as cells enter S phase. In terms of tissue distribution, expressed at low levels in the shoot apical meristem (SAM), leaves, ears and roots (including root tips).

Its subcellular location is the nucleus. Component of the origin recognition complex (ORC) that binds origins of replication. DNA-binding is ATP-dependent. The specific DNA sequences that define origins of replication have not been identified yet. The polypeptide is Origin of replication complex subunit 3 (Oryza sativa subsp. japonica (Rice)).